We begin with the raw amino-acid sequence, 427 residues long: 3-phosphoshikimate 1-carboxyvinyltransferase (427 aa).

Positions 22, 23, and 27 each coordinate 3-phosphoshikimate. Residue lysine 22 coordinates phosphoenolpyruvate. Phosphoenolpyruvate is bound by residues glycine 96 and arginine 124. The 3-phosphoshikimate site is built by serine 169, serine 170, glutamine 171, serine 197, aspartate 313, asparagine 336, and lysine 340. Position 171 (glutamine 171) interacts with phosphoenolpyruvate. The active-site Proton acceptor is the aspartate 313. Phosphoenolpyruvate is bound by residues arginine 344, arginine 386, and lysine 411.

It belongs to the EPSP synthase family. In terms of assembly, monomer.

Its subcellular location is the cytoplasm. It carries out the reaction 3-phosphoshikimate + phosphoenolpyruvate = 5-O-(1-carboxyvinyl)-3-phosphoshikimate + phosphate. The protein operates within metabolic intermediate biosynthesis; chorismate biosynthesis; chorismate from D-erythrose 4-phosphate and phosphoenolpyruvate: step 6/7. In terms of biological role, catalyzes the transfer of the enolpyruvyl moiety of phosphoenolpyruvate (PEP) to the 5-hydroxyl of shikimate-3-phosphate (S3P) to produce enolpyruvyl shikimate-3-phosphate and inorganic phosphate. This Escherichia coli O6:H1 (strain CFT073 / ATCC 700928 / UPEC) protein is 3-phosphoshikimate 1-carboxyvinyltransferase.